We begin with the raw amino-acid sequence, 183 residues long: Photosystem I assembly protein Ycf4 (183 aa).

A run of 2 helical transmembrane segments spans residues 17 to 39 (NYLL…FLSY) and 59 to 81 (FIPQ…IYIY).

It belongs to the Ycf4 family.

It is found in the plastid. The protein localises to the chloroplast thylakoid membrane. In terms of biological role, seems to be required for the assembly of the photosystem I complex. The sequence is that of Photosystem I assembly protein Ycf4 from Cyanidium caldarium (Red alga).